An 87-amino-acid chain; its full sequence is Putative defensin-like protein 317 (87 aa).

Positions 1 to 24 are cleaved as a signal peptide; that stretch reads MKSFLVAFLIVLVFFCVEMKIGNG. 3 disulfides stabilise this stretch: Cys-38/Cys-71, Cys-47/Cys-80, and Cys-56/Cys-82.

Belongs to the DEFL family.

It localises to the secreted. This chain is Putative defensin-like protein 317, found in Arabidopsis thaliana (Mouse-ear cress).